The sequence spans 224 residues: Germin-like protein 8-8 (224 aa).

The N-terminal stretch at 1-22 is a signal peptide; it reads MASPSFCLLAALLALVSWQAIA. C32 and C47 are disulfide-bonded. Residues 62–212 enclose the Cupin type-1 domain; it reads AMLDTPRKTN…AFQVEKGTID (151 aa). The N-linked (GlcNAc...) asparagine glycan is linked to N76. 3 residues coordinate Mn(2+): H109, H111, and E116. An N-linked (GlcNAc...) asparagine glycan is attached at N135. Residue H157 coordinates Mn(2+).

This sequence belongs to the germin family. As to quaternary structure, oligomer (believed to be a pentamer but probably hexamer).

The protein localises to the secreted. It localises to the extracellular space. Its subcellular location is the apoplast. In terms of biological role, plays a role in broad-spectrum disease resistance. Probably has no oxalate oxidase activity even if the active site is conserved. The sequence is that of Germin-like protein 8-8 from Oryza sativa subsp. japonica (Rice).